The sequence spans 200 residues: Glycerol-3-phosphate acyltransferase (200 aa).

A run of 5 helical transmembrane segments spans residues 6-26, 56-76, 82-102, 118-138, and 141-161; these read LTLG…AVLV, SAAM…YIAF, QVAL…PIFF, APIG…MVLI, and YSSL…WFLD.

Belongs to the PlsY family. Probably interacts with PlsX.

The protein resides in the cell inner membrane. It catalyses the reaction an acyl phosphate + sn-glycerol 3-phosphate = a 1-acyl-sn-glycero-3-phosphate + phosphate. The protein operates within lipid metabolism; phospholipid metabolism. Its function is as follows. Catalyzes the transfer of an acyl group from acyl-phosphate (acyl-PO(4)) to glycerol-3-phosphate (G3P) to form lysophosphatidic acid (LPA). This enzyme utilizes acyl-phosphate as fatty acyl donor, but not acyl-CoA or acyl-ACP. The sequence is that of Glycerol-3-phosphate acyltransferase from Shewanella sediminis (strain HAW-EB3).